Consider the following 373-residue polypeptide: 3 beta-hydroxysteroid dehydrogenase/Delta 5--&gt;4-isomerase type 1 (373 aa).

Residues 10–15 (GAGGFL), tyrosine 155, and lysine 159 contribute to the NADP(+) site. Lysine 159 functions as the Proton donor in the catalytic mechanism. A helical membrane pass occupies residues 288–308 (LALMYWIGFLLEVVSFLLSPV).

The protein belongs to the 3-beta-HSD family. In terms of tissue distribution, adrenal glands, testes and ovaries.

The protein resides in the endoplasmic reticulum membrane. It is found in the mitochondrion membrane. It catalyses the reaction a 3beta-hydroxy-Delta(5)-steroid + NAD(+) = a 3-oxo-Delta(5)-steroid + NADH + H(+). It carries out the reaction pregnenolone + NAD(+) = pregn-5-ene-3,20-dione + NADH + H(+). The enzyme catalyses 3beta-hydroxyandrost-5-en-17-one + NAD(+) = androst-5-ene-3,17-dione + NADH + H(+). The catalysed reaction is androst-5-en-3beta,17beta-diol + NAD(+) = 17beta-hydroxy-androst-5-en-3-one + NADH + H(+). It catalyses the reaction a 3beta-hydroxysteroid + NADP(+) = a 3-oxosteroid + NADPH + H(+). It carries out the reaction 5alpha-androstane-3beta,17beta-diol + NADP(+) = 17beta-hydroxy-5alpha-androstan-3-one + NADPH + H(+). The enzyme catalyses 3beta-hydroxy-5alpha-androstan-17-one + NADP(+) = 5alpha-androstan-3,17-dione + NADPH + H(+). The catalysed reaction is a 3-oxo-Delta(5)-steroid = a 3-oxo-Delta(4)-steroid. It catalyses the reaction pregn-5-ene-3,20-dione = progesterone. It carries out the reaction androst-5-ene-3,17-dione = androst-4-ene-3,17-dione. The enzyme catalyses 17beta-hydroxy-androst-5-en-3-one = testosterone. The catalysed reaction is 5alpha-androstane-3beta,17beta-diol + NAD(+) = 17beta-hydroxy-5alpha-androstan-3-one + NADH + H(+). Its pathway is steroid hormone biosynthesis. The protein operates within steroid metabolism. In terms of biological role, a bifunctional enzyme responsible for the oxidation and isomerization of 3beta-hydroxy-Delta(5)-steroid precursors to 3-oxo-Delta(4)-steroids, an essential step in steroid hormone biosynthesis. Specifically catalyzes the conversion of pregnenolone to progesterone, 17alpha-hydroxypregnenolone to 17alpha-hydroxyprogesterone, dehydroepiandrosterone (DHEA) to 4-androstenedione and androstenediol to testosterone. Additionally, catalyzes the interconversion between 3beta-hydroxy and 3-oxo-5alpha-androstane steroids controlling the bioavalability of the active forms. Specifically converts dihydrotestosterone to its inactive form 5alpha-androstanediol, that does not bind androgen receptor/AR. Also converts androstanedione, a precursor of testosterone and estrone, to epiandrosterone. Expected to use NAD(+) as preferred electron donor for the 3beta-hydroxy-steroid dehydrogenase activity and NADPH for the 3-ketosteroid reductase activity. In Macaca mulatta (Rhesus macaque), this protein is 3 beta-hydroxysteroid dehydrogenase/Delta 5--&gt;4-isomerase type 1 (HSD3B1).